Here is a 217-residue protein sequence, read N- to C-terminus: Adenylate kinase (217 aa).

10 to 15 (GAGKGT) serves as a coordination point for ATP. The tract at residues 30–59 (STGDIFRANIKNNTELGAKAKEYMDQGLLV) is NMP. AMP-binding positions include Thr31, Arg36, 57 to 59 (LLV), 85 to 88 (GFPR), and Gln92. The LID stretch occupies residues 126–163 (GRRACVSCGGTYHVVFTPTKKEGICDACGGELTIRDDD). Residue Arg127 coordinates ATP. The Zn(2+) site is built by Cys130 and Cys133. Residue 136–137 (TY) coordinates ATP. 2 residues coordinate Zn(2+): Cys150 and Cys153. 2 residues coordinate AMP: Arg160 and Arg171. Lys199 is an ATP binding site.

The protein belongs to the adenylate kinase family. In terms of assembly, monomer.

It localises to the cytoplasm. It carries out the reaction AMP + ATP = 2 ADP. Its pathway is purine metabolism; AMP biosynthesis via salvage pathway; AMP from ADP: step 1/1. Catalyzes the reversible transfer of the terminal phosphate group between ATP and AMP. Plays an important role in cellular energy homeostasis and in adenine nucleotide metabolism. This chain is Adenylate kinase, found in Lachnoclostridium phytofermentans (strain ATCC 700394 / DSM 18823 / ISDg) (Clostridium phytofermentans).